A 123-amino-acid chain; its full sequence is Ribonuclease P protein component (123 aa).

Belongs to the RnpA family. In terms of assembly, consists of a catalytic RNA component (M1 or rnpB) and a protein subunit.

The catalysed reaction is Endonucleolytic cleavage of RNA, removing 5'-extranucleotides from tRNA precursor.. In terms of biological role, RNaseP catalyzes the removal of the 5'-leader sequence from pre-tRNA to produce the mature 5'-terminus. It can also cleave other RNA substrates such as 4.5S RNA. The protein component plays an auxiliary but essential role in vivo by binding to the 5'-leader sequence and broadening the substrate specificity of the ribozyme. This chain is Ribonuclease P protein component, found in Streptococcus pneumoniae serotype 4 (strain ATCC BAA-334 / TIGR4).